The chain runs to 1070 residues: RecBCD enzyme subunit RecC (1070 aa).

Belongs to the RecC family. In terms of assembly, heterotrimer of RecB, RecC and RecD. All subunits contribute to DNA-binding.

In terms of biological role, a helicase/nuclease that prepares dsDNA breaks (DSB) for recombinational DNA repair. Binds to DSBs and unwinds DNA via a highly rapid and processive ATP-dependent bidirectional helicase activity. Unwinds dsDNA until it encounters a Chi (crossover hotspot instigator) sequence from the 3' direction. Cuts ssDNA a few nucleotides 3' to the Chi site. The properties and activities of the enzyme are changed at Chi. The Chi-altered holoenzyme produces a long 3'-ssDNA overhang and facilitates RecA-binding to the ssDNA for homologous DNA recombination and repair. Holoenzyme degrades any linearized DNA that is unable to undergo homologous recombination. In the holoenzyme this subunit recognizes the wild-type Chi sequence, and when added to isolated RecB increases its ATP-dependent helicase processivity. The chain is RecBCD enzyme subunit RecC from Buchnera aphidicola subsp. Acyrthosiphon pisum (strain APS) (Acyrthosiphon pisum symbiotic bacterium).